The primary structure comprises 128 residues: Sulfurtransferase TusD (128 aa).

Catalysis depends on cysteine 78, which acts as the Cysteine persulfide intermediate.

This sequence belongs to the DsrE/TusD family. Heterohexamer, formed by a dimer of trimers. The hexameric TusBCD complex contains 2 copies each of TusB, TusC and TusD. The TusBCD complex interacts with TusE.

It is found in the cytoplasm. Part of a sulfur-relay system required for 2-thiolation of 5-methylaminomethyl-2-thiouridine (mnm(5)s(2)U) at tRNA wobble positions. Accepts sulfur from TusA and transfers it in turn to TusE. The chain is Sulfurtransferase TusD from Klebsiella pneumoniae (strain 342).